Here is a 310-residue protein sequence, read N- to C-terminus: GTPase Era (310 aa).

One can recognise an Era-type G domain in the interval His17–Ala184. A G1 region spans residues Gly25 to Ser32. Position 25–32 (Gly25–Ser32) interacts with GTP. Residues Gln51–Ala55 form a G2 region. The tract at residues Asp72–Gly75 is G3. GTP contacts are provided by residues Asp72 to Ile76 and Asn134 to Asp137. The tract at residues Asn134–Asp137 is G4. The G5 stretch occupies residues Val163–Ala165. One can recognise a KH type-2 domain in the interval Leu215 to Glu292.

Belongs to the TRAFAC class TrmE-Era-EngA-EngB-Septin-like GTPase superfamily. Era GTPase family. In terms of assembly, monomer.

It is found in the cytoplasm. Its subcellular location is the cell inner membrane. Its function is as follows. An essential GTPase that binds both GDP and GTP, with rapid nucleotide exchange. Plays a role in 16S rRNA processing and 30S ribosomal subunit biogenesis and possibly also in cell cycle regulation and energy metabolism. This is GTPase Era from Mesorhizobium japonicum (strain LMG 29417 / CECT 9101 / MAFF 303099) (Mesorhizobium loti (strain MAFF 303099)).